Reading from the N-terminus, the 356-residue chain is CX3C chemokine receptor 1 (356 aa).

Residues 1-26 lie on the Extracellular side of the membrane; sequence MTTLYSDWATESFEYDESSEACFIGD. The chain crosses the membrane as a helical span at residues 27-47; sequence IVAFGTIFLSIFYSLVFAFGL. Topologically, residues 48 to 68 are cytoplasmic; that stretch reads VGNLLVVCALTSSRKPKSITD. A helical membrane pass occupies residues 69–89; it reads IYLLNLALSDLLFVATLPFWT. Topologically, residues 90 to 105 are extracellular; it reads HYVISEQGFHNAVCKL. Cysteine 103 and cysteine 176 are oxidised to a cystine. Residues 106 to 126 traverse the membrane as a helical segment; the sequence is TTALFFIGFFGGIFFITVISI. Topologically, residues 127–147 are cytoplasmic; it reads DRYMAIVLAANSINNRTVQHG. A helical transmembrane segment spans residues 148–168; it reads VTTSLGVWAAAILVAAPQFMF. Residues 169-195 are Extracellular-facing; that stretch reads TKQKGNECLGDYPEVLQDIWPVLRNTE. A helical membrane pass occupies residues 196-216; the sequence is ANFLGFLLPVLIMSYCYFRII. The Cytoplasmic segment spans residues 217 to 232; that stretch reads QTLFSCKNHKKAKAIK. A helical membrane pass occupies residues 233–253; the sequence is LILLVVIVFFLFWTPYNVMIF. At 254-277 the chain is on the extracellular side; the sequence is LETLKLYGFFPNCDMKRDLRLALS. The chain crosses the membrane as a helical span at residues 278-298; that stretch reads VTETVAFSHCCLNPLIYAFAG. The Cytoplasmic portion of the chain corresponds to 299–356; the sequence is QKFRRYLRHLSRKCQAVLCGRPVHVSFSPSESQRSRQESIVSSNFTHYTSDGDASLLL. Threonine 347 bears the Phosphothreonine mark.

It belongs to the G-protein coupled receptor 1 family. Found in a ternary complex with CX3CL1 and ITGAV:ITGB3 or ITGA4:ITGB1. In terms of processing, this protein is not N-glycosylated which is unusual for G-protein-coupled receptors.

It localises to the cell membrane. In terms of biological role, receptor for the C-X3-C chemokine fractalkine (CX3CL1) present on many early leukocyte cells; CX3CR1-CX3CL1 signaling exerts distinct functions in different tissue compartments, such as immune response, inflammation, cell adhesion and chemotaxis. CX3CR1-CX3CL1 signaling mediates cell migratory functions. Responsible for the recruitment of natural killer (NK) cells to inflamed tissues. Acts as a regulator of inflammation process leading to atherogenesis by mediating macrophage and monocyte recruitment to inflamed atherosclerotic plaques, promoting cell survival. Involved in airway inflammation by promoting interleukin 2-producing T helper (Th2) cell survival in inflamed lung. Involved in the migration of circulating monocytes to non-inflamed tissues, where they differentiate into macrophages and dendritic cells. Acts as a negative regulator of angiogenesis, probably by promoting macrophage chemotaxis. Plays a key role in brain microglia by regulating inflammatory response in the central nervous system (CNS) and regulating synapse maturation. Required to restrain the microglial inflammatory response in the CNS and the resulting parenchymal damage in response to pathological stimuli. Involved in brain development by participating in synaptic pruning, a natural process during which brain microglia eliminates extra synapses during postnatal development. Synaptic pruning by microglia is required to promote the maturation of circuit connectivity during brain development. Acts as an important regulator of the gut microbiota by controlling immunity to intestinal bacteria and fungi. Expressed in lamina propria dendritic cells in the small intestine, which form transepithelial dendrites capable of taking up bacteria in order to provide defense against pathogenic bacteria. Required to initiate innate and adaptive immune responses against dissemination of commensal fungi (mycobiota) component of the gut: expressed in mononuclear phagocytes (MNPs) and acts by promoting induction of antifungal IgG antibodies response to confer protection against disseminated C.albicans or C.auris infection. Also acts as a receptor for C-C motif chemokine CCL26, inducing cell chemotaxis. This is CX3C chemokine receptor 1 from Oryctolagus cuniculus (Rabbit).